Here is a 469-residue protein sequence, read N- to C-terminus: Ubiquitin carboxyl-terminal hydrolase MINDY-1 (469 aa).

The interval methionine 1 to leucine 85 is disordered. Basic and acidic residues predominate over residues glutamate 23–alanine 53. Low complexity predominate over residues leucine 66–alanine 76. A Phosphoserine modification is found at serine 103. The active-site Nucleophile is the cysteine 137. Residue histidine 319 is the Proton acceptor of the active site. A ubiquitin-binding domain (UBD) region spans residues glutamine 388–glutamine 426. Serine 441 is modified (phosphoserine). The disordered stretch occupies residues serine 441–leucine 469. Residues alanine 453–leucine 469 are compositionally biased toward basic and acidic residues.

It belongs to the MINDY deubiquitinase family. FAM63 subfamily.

It carries out the reaction Thiol-dependent hydrolysis of ester, thioester, amide, peptide and isopeptide bonds formed by the C-terminal Gly of ubiquitin (a 76-residue protein attached to proteins as an intracellular targeting signal).. Functionally, hydrolase that can specifically remove 'Lys-48'-linked conjugated ubiquitin from proteins. Has exodeubiquitinase activity and has a preference for long polyubiquitin chains. May play a regulatory role at the level of protein turnover. This chain is Ubiquitin carboxyl-terminal hydrolase MINDY-1, found in Homo sapiens (Human).